The sequence spans 1037 residues: Importin-8 (1037 aa).

The region spanning 22-102 (AENELNQSYK…RDNIVEGIIR (81 aa)) is the Importin N-terminal domain. The segment covering 886–895 (DRSKAEKADM) has biased composition (basic and acidic residues). The tract at residues 886–934 (DRSKAEKADMEENEEISSDEEETNVTAQAMQSNNGRGEDEEEEDDDWDE) is disordered. Residues 896-908 (EENEEISSDEEET) show a composition bias toward acidic residues. Phosphoserine occurs at positions 902 and 903. The span at 909 to 920 (NVTAQAMQSNNG) shows a compositional bias: polar residues. Over residues 923 to 934 (EDEEEEDDDWDE) the composition is skewed to acidic residues.

Belongs to the importin beta family. Forms a heterodimer with KPNB1. Interacts with SRP19. Interacts with RPL23A. Binds directly to nuclear pore complexes. Interacts with LRPPRC; the interaction occurs when LRPPRC is in its RNA-free form and promotes import of LRPPRC to the nucleus to allow for EIF4E-mediated export of mRNAS from the nucleus to the cytoplasm.

Its subcellular location is the cytoplasm. The protein resides in the nucleus. Involved in nuclear protein import, either by acting as autonomous nuclear transport receptor or as an adapter-like protein in association with the importin-beta subunit KPNB1. Acting autonomously, may serve as receptor for nuclear localization signals (NLS) and promote translocation of import substrates through the nuclear pore complex (NPC) by an energy requiring, Ran-dependent mechanism. At the nucleoplasmic side of the NPC, Ran binds to importin, the importin/substrate complex dissociates and importin is re-exported from the nucleus to the cytoplasm where GTP hydrolysis releases Ran. The directionality of nuclear import is thought to be conferred by an asymmetric distribution of the GTP- and GDP-bound forms of Ran between the cytoplasm and nucleus. In vitro mediates the nuclear import of the signal recognition particle protein SRP19. May also be involved in cytoplasm-to-nucleus shuttling of a broad spectrum of other cargos, including Argonaute-microRNAs complexes, the JUN protein, RELA/NF-kappa-B p65 subunit, the translation initiation factor EIF4E and a set of receptor-activated mothers against decapentaplegic homolog (SMAD) transcription factors that play a critical role downstream of the large family of transforming growth factor beta and bone morphogenetic protein (BMP) cytokines. The polypeptide is Importin-8 (IPO8) (Homo sapiens (Human)).